Reading from the N-terminus, the 132-residue chain is Large ribosomal subunit protein bL17 (132 aa).

Belongs to the bacterial ribosomal protein bL17 family. Part of the 50S ribosomal subunit. Contacts protein L32.

This is Large ribosomal subunit protein bL17 from Anaplasma phagocytophilum (strain HZ).